Consider the following 37-residue polypeptide: Calcitonin gene-related peptide 1 (37 aa).

Cysteines 2 and 7 form a disulfide. A Phenylalanine amide modification is found at phenylalanine 37.

Belongs to the calcitonin family.

It localises to the secreted. Functionally, CGRP1/CALCA is a peptide hormone that induces vasodilation mediated by the CALCRL-RAMP1 receptor complex. Dilates a variety of vessels including the coronary, cerebral and systemic vasculature. Its abundance in the CNS also points toward a neurotransmitter or neuromodulator role. It also elevates platelet cAMP. CGRP1 can also bind and activate CALCR-RAMP1 (AMYR1) receptor complex. This chain is Calcitonin gene-related peptide 1 (CALCA), found in Ovis aries (Sheep).